Here is a 186-residue protein sequence, read N- to C-terminus: Transposon Tn21 resolvase (186 aa).

The 134-residue stretch at 4–137 folds into the Resolvase/invertase-type recombinase catalytic domain; it reads QRIGYIRVST…EGIALAKQRG (134 aa). S12 functions as the O-(5'-phospho-DNA)-serine intermediate in the catalytic mechanism. Residues 164 to 183 constitute a DNA-binding region (H-T-H motif); it reads KTKLAREFGISRETLYQYLR.

The protein belongs to the site-specific recombinase resolvase family.

Its function is as follows. Resolvase catalyzes the resolution (a site-specific recombination) of the cointegrated replicon to yield the final transposition products. This chain is Transposon Tn21 resolvase (tnpR), found in Escherichia coli.